A 230-amino-acid chain; its full sequence is Phosphoribosylformylglycinamidine synthase subunit PurQ (230 aa).

Positions 3–230 (SAIIVFPGTN…LFQSIVESLS (228 aa)) constitute a Glutamine amidotransferase type-1 domain. The Nucleophile role is filled by Cys-87. Residues His-204 and Glu-206 contribute to the active site.

Part of the FGAM synthase complex composed of 1 PurL, 1 PurQ and 2 PurS subunits.

It is found in the cytoplasm. It catalyses the reaction N(2)-formyl-N(1)-(5-phospho-beta-D-ribosyl)glycinamide + L-glutamine + ATP + H2O = 2-formamido-N(1)-(5-O-phospho-beta-D-ribosyl)acetamidine + L-glutamate + ADP + phosphate + H(+). The catalysed reaction is L-glutamine + H2O = L-glutamate + NH4(+). The protein operates within purine metabolism; IMP biosynthesis via de novo pathway; 5-amino-1-(5-phospho-D-ribosyl)imidazole from N(2)-formyl-N(1)-(5-phospho-D-ribosyl)glycinamide: step 1/2. Functionally, part of the phosphoribosylformylglycinamidine synthase complex involved in the purines biosynthetic pathway. Catalyzes the ATP-dependent conversion of formylglycinamide ribonucleotide (FGAR) and glutamine to yield formylglycinamidine ribonucleotide (FGAM) and glutamate. The FGAM synthase complex is composed of three subunits. PurQ produces an ammonia molecule by converting glutamine to glutamate. PurL transfers the ammonia molecule to FGAR to form FGAM in an ATP-dependent manner. PurS interacts with PurQ and PurL and is thought to assist in the transfer of the ammonia molecule from PurQ to PurL. This is Phosphoribosylformylglycinamidine synthase subunit PurQ from Rhodospirillum rubrum (strain ATCC 11170 / ATH 1.1.1 / DSM 467 / LMG 4362 / NCIMB 8255 / S1).